The following is a 170-amino-acid chain: Peptide deformylase (170 aa).

Fe cation contacts are provided by Cys94 and His136. Glu137 is a catalytic residue. His140 is a binding site for Fe cation.

Belongs to the polypeptide deformylase family. Requires Fe(2+) as cofactor.

It carries out the reaction N-terminal N-formyl-L-methionyl-[peptide] + H2O = N-terminal L-methionyl-[peptide] + formate. Functionally, removes the formyl group from the N-terminal Met of newly synthesized proteins. Requires at least a dipeptide for an efficient rate of reaction. N-terminal L-methionine is a prerequisite for activity but the enzyme has broad specificity at other positions. The polypeptide is Peptide deformylase (Wolinella succinogenes (strain ATCC 29543 / DSM 1740 / CCUG 13145 / JCM 31913 / LMG 7466 / NCTC 11488 / FDC 602W) (Vibrio succinogenes)).